The primary structure comprises 735 residues: Muskelin (735 aa).

Alanine 2 is subject to N-acetylalanine. The LisH domain occupies arginine 172–leucine 204. In terms of domain architecture, CTLH spans histidine 206–serine 258. Kelch repeat units follow at residues threonine 284–lysine 330, glutamine 339–glutamine 391, methionine 400–glycine 458, cysteine 469–threonine 515, glutamate 526–glutamate 578, and valine 597–aspartate 651.

As to quaternary structure, homodimer; may form higher oligomers. Identified in the CTLH complex that contains GID4, RANBP9 and/or RANBP10, MKLN1, MAEA, RMND5A (or alternatively its paralog RMND5B), GID8, ARMC8, WDR26 and YPEL5. Within this complex, MAEA, RMND5A (or alternatively its paralog RMND5B), GID8, WDR26, and RANBP9 and/or RANBP10 form the catalytic core, while GID4, MKLN1, ARMC8 and YPEL5 have ancillary roles. Interacts with RANBP9. Part of a complex consisting of RANBP9, MKLN1 and GID8. Interacts with GABRA1. Interacts with the C-terminal tail of PTGER3.

It localises to the cytoplasm. The protein localises to the cell projection. Its subcellular location is the ruffle. The protein resides in the cell cortex. It is found in the synapse. It localises to the postsynapse. In terms of biological role, component of the CTLH E3 ubiquitin-protein ligase complex that selectively accepts ubiquitin from UBE2H and mediates ubiquitination and subsequent proteasomal degradation of the transcription factor HBP1. Required for internalization of the GABA receptor GABRA1 from the cell membrane via endosomes and subsequent GABRA1 degradation. Acts as a mediator of cell spreading and cytoskeletal responses to the extracellular matrix component THBS1. The chain is Muskelin (Mkln1) from Rattus norvegicus (Rat).